We begin with the raw amino-acid sequence, 400 residues long: MAAGGLSRSERKAAERVRRLREEQQRERLRQVSRILRKAATERSAEEGRLLAESEDLVTELQGRSRRREGLKRRQEEVCDDPEELQRKVRELASAVRNAKYLVVYTGAGISTAASIPDYRGPNGVWTLLQKGRSVSAADLSEAEPTLTHMSITRLHEQKLVQHVVSQNCDGLHLRSGLPRSAMSELHGNMYIEVCTACTPNREYVRVFDVTERTALHRHQTGRTCHKCGGQLRDTIVHFGERGTLGQPLNWEAATEAASKADTILCLGSSLKVLKKYPHLWCMTKPPSRRPKLYIVNLQWTPKDDWAALKLHGKCDDVMQLLMDELGLEIPRYSRWQDPIFSLATPLRAGEEGSHSRKSLCRSREEPGPGDRGAPLSSAPILGGWFGRGCTKRTKRKKVT.

Positions 1 to 28 are disordered; the sequence is MAAGGLSRSERKAAERVRRLREEQQRER. Basic and acidic residues predominate over residues 8–28; that stretch reads RSERKAAERVRRLREEQQRER. The 248-residue stretch at 82-329 folds into the Deacetylase sirtuin-type domain; the sequence is PEELQRKVRE…QLLMDELGLE (248 aa). NAD(+) is bound by residues 107 to 126 and 167 to 170; these read GAGI…NGVW and QNCD. The Proton acceptor role is filled by His-187. 4 residues coordinate Zn(2+): Cys-195, Cys-198, Cys-225, and Cys-228. NAD(+)-binding positions include 268–270, 297–299, and Cys-315; these read GSS and NLQ. Positions 354–380 are disordered; that stretch reads SHSRKSLCRSREEPGPGDRGAPLSSAP. Arg-388 carries the asymmetric dimethylarginine; alternate modification. Arg-388 bears the Omega-N-methylarginine; alternate mark.

The protein belongs to the sirtuin family. Class IV subfamily. Interacts with UBTF and the RNA polymerase I complex. Interacts with components of the B-WICH complex, such as MYBBP1A, SMARCA5/SNF2H and BAZ1B/WSTF. Interacts with ELK4, leading to stabilization at target promoters for H3K18Ac deacetylation. Interacts with histone H2A and/or histone H2B. Interacts with DNMT1. Interacts with SIRT1. Requires Zn(2+) as cofactor. Phosphorylated during mitosis. Post-translationally, methylation at Arg-388 by PRMT6 inhibits the H3K18Ac histone deacetylase activity, promoting mitochondria biogenesis and maintaining mitochondria respiration. In terms of processing, ubiquitinated via 'Lys-63'-linked ubiquitin chains. Deubiquitinated by USP7, inhibiting the H3K18Ac histone deacetylase activity and regulating gluconeogenesis. Ubiquitinated by E3 ubiquitin-protein ligase complex containing FBXO7; leading to proteasomal degradation.

The protein localises to the nucleus. It is found in the nucleolus. Its subcellular location is the nucleoplasm. The protein resides in the chromosome. It localises to the cytoplasm. The catalysed reaction is N(6)-acetyl-L-lysyl-[protein] + NAD(+) + H2O = 2''-O-acetyl-ADP-D-ribose + nicotinamide + L-lysyl-[protein]. It carries out the reaction N(6)-glutaryl-L-lysyl-[protein] + NAD(+) + H2O = 2''-O-glutaryl-ADP-D-ribose + nicotinamide + L-lysyl-[protein]. The enzyme catalyses N(6)-succinyl-L-lysyl-[protein] + NAD(+) + H2O = 2''-O-succinyl-ADP-D-ribose + nicotinamide + L-lysyl-[protein]. It catalyses the reaction N(6)-propanoyl-L-lysyl-[protein] + NAD(+) + H2O = 3''-O-propanoyl-ADP-D-ribose + nicotinamide + L-lysyl-[protein]. The catalysed reaction is N(6)-decanoyl-L-lysyl-[protein] + NAD(+) + H2O = 2''-O-decanoyl-ADP-D-ribose + nicotinamide + L-lysyl-[protein]. With respect to regulation, NAD-dependent protein-lysine deacetylase and deacylase activities are activated by nucleic acids. Histone deacetylase activity is activated by DNA. Protein-lysine deacylase activity is activated by RNA. H3K18Ac histone deacetylase activity is inhibited by methylation at Arg-388. H3K18Ac histone deacetylase activity is inhibited by deubiquitination by USP7. Functionally, NAD-dependent protein-lysine deacylase that can act both as a deacetylase or deacylase (desuccinylase, depropionylase, deglutarylase and dedecanoylase), depending on the context. Specifically mediates deacetylation of histone H3 at 'Lys-18' (H3K18Ac). In contrast to other histone deacetylases, displays strong preference for a specific histone mark, H3K18Ac, directly linked to control of gene expression. H3K18Ac is mainly present around the transcription start site of genes and has been linked to activation of nuclear hormone receptors; SIRT7 thereby acts as a transcription repressor. Moreover, H3K18 hypoacetylation has been reported as a marker of malignancy in various cancers and seems to maintain the transformed phenotype of cancer cells. Also able to mediate deacetylation of histone H3 at 'Lys-36' (H3K36Ac) in the context of nucleosomes. Also mediates deacetylation of non-histone proteins, such as ATM, CDK9, DDX21, DDB1, FBL, FKBP5/FKBP51, GABPB1, RAN, RRP9/U3-55K and POLR1E/PAF53. Enriched in nucleolus where it stimulates transcription activity of the RNA polymerase I complex. Acts by mediating the deacetylation of the RNA polymerase I subunit POLR1E/PAF53, thereby promoting the association of RNA polymerase I with the rDNA promoter region and coding region. In response to metabolic stress, SIRT7 is released from nucleoli leading to hyperacetylation of POLR1E/PAF53 and decreased RNA polymerase I transcription. Required to restore the transcription of ribosomal RNA (rRNA) at the exit from mitosis. Promotes pre-ribosomal RNA (pre-rRNA) cleavage at the 5'-terminal processing site by mediating deacetylation of RRP9/U3-55K, a core subunit of the U3 snoRNP complex. Mediates 'Lys-37' deacetylation of Ran, thereby regulating the nuclear export of NF-kappa-B subunit RELA/p65. Acts as a regulator of DNA damage repair by mediating deacetylation of ATM during the late stages of DNA damage response, promoting ATM dephosphorylation and deactivation. Suppresses the activity of the DCX (DDB1-CUL4-X-box) E3 ubiquitin-protein ligase complexes by mediating deacetylation of DDB1, which prevents the interaction between DDB1 and CUL4 (CUL4A or CUL4B). Activates RNA polymerase II transcription by mediating deacetylation of CDK9, thereby promoting 'Ser-2' phosphorylation of the C-terminal domain (CTD) of RNA polymerase II. Deacetylates FBL, promoting histone-glutamine methyltransferase activity of FBL. Acts as a regulator of mitochondrial function by catalyzing deacetylation of GABPB1. Regulates Akt/AKT1 activity by mediating deacetylation of FKBP5/FKBP51. Required to prevent R-loop-associated DNA damage and transcription-associated genomic instability by mediating deacetylation and subsequent activation of DDX21, thereby overcoming R-loop-mediated stalling of RNA polymerases. In addition to protein deacetylase activity, also acts as a protein-lysine deacylase. Acts as a protein depropionylase by mediating depropionylation of Osterix (SP7), thereby regulating bone formation by osteoblasts. Acts as a histone deglutarylase by mediating deglutarylation of histone H4 on 'Lys-91' (H4K91glu); a mark that destabilizes nucleosomes by promoting dissociation of the H2A-H2B dimers from nucleosomes. Acts as a histone desuccinylase: in response to DNA damage, recruited to DNA double-strand breaks (DSBs) and catalyzes desuccinylation of histone H3 on 'Lys-122' (H3K122succ), thereby promoting chromatin condensation and DSB repair. Also promotes DSB repair by promoting H3K18Ac deacetylation, regulating non-homologous end joining (NHEJ). Along with its role in DNA repair, required for chromosome synapsis during prophase I of female meiosis by catalyzing H3K18Ac deacetylation. Involved in transcriptional repression of LINE-1 retrotransposon via H3K18Ac deacetylation, and promotes their association with the nuclear lamina. Required to stabilize ribosomal DNA (rDNA) heterochromatin and prevent cellular senescence induced by rDNA instability. Acts as a negative regulator of SIRT1 by preventing autodeacetylation of SIRT1, restricting SIRT1 deacetylase activity. This Bos taurus (Bovine) protein is NAD-dependent protein deacetylase sirtuin-7 (SIRT7).